We begin with the raw amino-acid sequence, 543 residues long: Probable E3 ubiquitin-protein ligase ARI9 (543 aa).

Residues 1-26 (MDFSDDDMIDNKSGEENYSYGGGNES) are disordered. A TRIAD supradomain region spans residues 124–332 (VNIQCGICFE…RHSGACNRFV (209 aa)). The Zn(2+) site is built by C128, C131, C145, H147, C150, C153, C173, C178, C217, C222, C240, C242, C247, C250, H255, C260, C287, and C290. The RING-type 1 zinc-finger motif lies at 128–178 (CGICFESYTREEIARVSCGHPYCKTCWAGYITTKIEDGPGCLRVKCPEPSC). The segment at 197-260 (EKYSRYILRS…SEDAHSPVDC (64 aa)) adopts an IBR-type zinc-finger fold. Residues 287–317 (CPECKRPIEKNDGCNHMTCSAPCGHEFCWIC) form an RING-type 2; atypical zinc finger. Residue C300 is part of the active site. C305, C309, C314, C317, H324, and C328 together coordinate Zn(2+).

Belongs to the RBR family. Ariadne subfamily. Zn(2+) serves as cofactor.

It carries out the reaction [E2 ubiquitin-conjugating enzyme]-S-ubiquitinyl-L-cysteine + [acceptor protein]-L-lysine = [E2 ubiquitin-conjugating enzyme]-L-cysteine + [acceptor protein]-N(6)-ubiquitinyl-L-lysine.. Its pathway is protein modification; protein ubiquitination. Might act as an E3 ubiquitin-protein ligase, or as part of E3 complex, which accepts ubiquitin from specific E2 ubiquitin-conjugating enzymes and then transfers it to substrates. This is Probable E3 ubiquitin-protein ligase ARI9 (ARI9) from Arabidopsis thaliana (Mouse-ear cress).